Here is a 704-residue protein sequence, read N- to C-terminus: Serotransferrin (704 aa).

A signal peptide spans 1–19 (MRPAVRALLACAVLGLCLA). 2 Transferrin-like domains span residues 25 to 351 (VRWC…NLRE) and 364 to 689 (VKWC…NLRQ). Disulfide bonds link cysteine 28/cysteine 66 and cysteine 38/cysteine 57. Position 42 is a dimethylated arginine (arginine 42). Residues aspartate 81 and tyrosine 113 each coordinate Fe(3+). Disulfide bonds link cysteine 136/cysteine 217, cysteine 176/cysteine 192, cysteine 179/cysteine 200, cysteine 189/cysteine 202, and cysteine 250/cysteine 264. Hydrogencarbonate-binding residues include threonine 138, arginine 142, alanine 144, and glycine 145. Tyrosine 211 is a Fe(3+) binding site. Position 272 (histidine 272) interacts with Fe(3+). 11 cysteine pairs are disulfide-bonded: cysteine 362–cysteine 622, cysteine 367–cysteine 399, cysteine 377–cysteine 390, cysteine 424–cysteine 699, cysteine 441–cysteine 663, cysteine 473–cysteine 549, cysteine 497–cysteine 690, cysteine 507–cysteine 521, cysteine 518–cysteine 532, cysteine 589–cysteine 603, and cysteine 641–cysteine 646. The Fe(3+) site is built by aspartate 414 and tyrosine 449. Threonine 475, arginine 479, alanine 481, and glycine 482 together coordinate hydrogencarbonate. A glycan (N-linked (GlcNAc...) asparagine) is linked at asparagine 514. Tyrosine 543 is a Fe(3+) binding site. Histidine 611 is a binding site for Fe(3+). Serine 691 bears the Phosphoserine mark.

The protein belongs to the transferrin family. Monomer. Part of a complex composed of SLC40A1/ferroportin, TF/transferrin and HEPH/hephaestin that transfers iron from cells to transferrin. As to expression, expressed by the liver and secreted in plasma.

It localises to the secreted. In terms of biological role, transferrins are iron binding transport proteins which can bind two Fe(3+) ions in association with the binding of an anion, usually bicarbonate. It is responsible for the transport of iron from sites of absorption and heme degradation to those of storage and utilization. Serum transferrin may also have a further role in stimulating cell proliferation. This is Serotransferrin (TF) from Bos taurus (Bovine).